The chain runs to 652 residues: Translation factor guf1, mitochondrial (652 aa).

A mitochondrion-targeting transit peptide spans Met-1–Pro-44. Residues Asn-56–Lys-237 form the tr-type G domain. Residues Ala-65 to Ser-72, Asp-130 to His-134, and Asn-184 to Asp-187 each bind GTP.

This sequence belongs to the TRAFAC class translation factor GTPase superfamily. Classic translation factor GTPase family. LepA subfamily.

The protein resides in the mitochondrion inner membrane. It catalyses the reaction GTP + H2O = GDP + phosphate + H(+). Its function is as follows. Promotes mitochondrial protein synthesis. May act as a fidelity factor of the translation reaction, by catalyzing a one-codon backward translocation of tRNAs on improperly translocated ribosomes. Binds to mitochondrial ribosomes in a GTP-dependent manner. The polypeptide is Translation factor guf1, mitochondrial (guf1) (Schizosaccharomyces pombe (strain 972 / ATCC 24843) (Fission yeast)).